The chain runs to 283 residues: Shikimate dehydrogenase (NADP(+)) (283 aa).

Shikimate is bound by residues 19-21 (SFS) and threonine 66. The Proton acceptor role is filled by lysine 70. An NADP(+)-binding site is contributed by glutamate 82. The shikimate site is built by asparagine 91 and aspartate 106. Residues 129–133 (GAGGA) and isoleucine 225 each bind NADP(+). Position 227 (tyrosine 227) interacts with shikimate. Glycine 248 provides a ligand contact to NADP(+).

The protein belongs to the shikimate dehydrogenase family. Homodimer.

The catalysed reaction is shikimate + NADP(+) = 3-dehydroshikimate + NADPH + H(+). It functions in the pathway metabolic intermediate biosynthesis; chorismate biosynthesis; chorismate from D-erythrose 4-phosphate and phosphoenolpyruvate: step 4/7. Its function is as follows. Involved in the biosynthesis of the chorismate, which leads to the biosynthesis of aromatic amino acids. Catalyzes the reversible NADPH linked reduction of 3-dehydroshikimate (DHSA) to yield shikimate (SA). This Methanosphaera stadtmanae (strain ATCC 43021 / DSM 3091 / JCM 11832 / MCB-3) protein is Shikimate dehydrogenase (NADP(+)).